A 427-amino-acid chain; its full sequence is Fc receptor-like B (427 aa).

The first 17 residues, 1 to 17 (MWMLAALLLLVPRSGKA), serve as a signal peptide directing secretion. Ig-like C2-type domains follow at residues 23 to 101 (PVLT…LSVS) and 103 to 189 (DWLI…VAVT). 2 cysteine pairs are disulfide-bonded: Cys-44/Cys-85 and Cys-124/Cys-168. N-linked (GlcNAc...) asparagine glycosylation is present at Asn-152. Residues 401–418 (TPETPNSHVTVNPATPET) show a composition bias toward polar residues. The disordered stretch occupies residues 401–427 (TPETPNSHVTVNPATPETTVMEGRVDS).

Expressed at low levels. Expressed in B-lymphocytes. Detected in spleen, lymph node, kidney, lung and brain.

It localises to the cytoplasm. Its subcellular location is the endoplasmic reticulum. The polypeptide is Fc receptor-like B (Fcrlb) (Mus musculus (Mouse)).